The primary structure comprises 912 residues: Coatomer subunit beta (912 aa).

10 HEAT repeats span residues 59–96 (PIPQ…THLG), 100–135 (SEMI…REAE), 136–172 (VLEP…HFDY), 244–281 (SERS…APTA), 300–337 (NVKM…PNID), 339–375 (CKKV…KEFD), 397–434 (EVLG…TYPS), 441–479 (KKLI…AMTS), 550–575 (LKAQ…TSKS), and 576–612 (AYER…YLKY).

In terms of assembly, oligomeric complex that consists of at least the alpha, beta, beta', gamma, delta, epsilon and zeta subunits.

The protein resides in the cytoplasm. It localises to the golgi apparatus membrane. Its subcellular location is the cytoplasmic vesicle. The protein localises to the COPI-coated vesicle membrane. The coatomer is a cytosolic protein complex that binds to dilysine motifs and reversibly associates with Golgi non-clathrin-coated vesicles, which further mediate biosynthetic protein transport from the ER, via the Golgi up to the trans Golgi network. Coatomer complex is required for budding from Golgi membranes, and is essential for the retrograde Golgi-to-ER transport of dilysine-tagged proteins. This chain is Coatomer subunit beta (copb), found in Dictyostelium discoideum (Social amoeba).